We begin with the raw amino-acid sequence, 155 residues long: Interleukin-2 (155 aa).

Positions 1–20 (MYKIQLLSCIALTLALVANG) are cleaved as a signal peptide. O-linked (GalNAc...) threonine glycosylation occurs at Thr23. Cys79 and Cys127 are disulfide-bonded.

Belongs to the IL-2 family.

It is found in the secreted. In terms of biological role, cytokine produced by activated CD4-positive helper T-cells and to a lesser extend activated CD8-positive T-cells and natural killer (NK) cells that plays pivotal roles in the immune response and tolerance. Binds to a receptor complex composed of either the high-affinity trimeric IL-2R (IL2RA/CD25, IL2RB/CD122 and IL2RG/CD132) or the low-affinity dimeric IL-2R (IL2RB and IL2RG). Interaction with the receptor leads to oligomerization and conformation changes in the IL-2R subunits resulting in downstream signaling starting with phosphorylation of JAK1 and JAK3. In turn, JAK1 and JAK3 phosphorylate the receptor to form a docking site leading to the phosphorylation of several substrates including STAT5. This process leads to activation of several pathways including STAT, phosphoinositide-3-kinase/PI3K and mitogen-activated protein kinase/MAPK pathways. Functions as a T-cell growth factor and can increase NK-cell cytolytic activity as well. Promotes strong proliferation of activated B-cells and subsequently immunoglobulin production. Plays a pivotal role in regulating the adaptive immune system by controlling the survival and proliferation of regulatory T-cells, which are required for the maintenance of immune tolerance. Moreover, participates in the differentiation and homeostasis of effector T-cell subsets, including Th1, Th2, Th17 as well as memory CD8-positive T-cells. This chain is Interleukin-2 (IL2), found in Bubalus bubalis (Domestic water buffalo).